The chain runs to 509 residues: Zinc metalloproteinase aureolysin (509 aa).

The N-terminal stretch at 1–27 (MRKFSRYAFTSMATVTLLSSLTPAALA) is a signal peptide. Positions 28–208 (SDTNHKPATS…VVEKTNLVKE (181 aa)) are excised as a propeptide. D348 lines the Ca(2+) pocket. Residue H352 coordinates Zn(2+). The active site involves E353. Residues H356 and E376 each contribute to the Zn(2+) site. Ca(2+) contacts are provided by D387, E389, D390, L392, E395, Y398, T399, K402, and D405. H436 acts as the Proton donor in catalysis.

This sequence belongs to the peptidase M4 family. As to quaternary structure, monomer. It depends on Ca(2+) as a cofactor. Zn(2+) is required as a cofactor.

It catalyses the reaction Cleavage of insulin B chain with specificity similar to that of thermolysin, preferring hydrophobic P1' residues. Activates the glutamyl endopeptidase (EC 3.4.21.19) of Staphylococcus aureus.. Plays an essential role in immune evasion by helping bacteria to resist complement-mediated killing by neutrophils. Inhibits the deposition of host C3b on bacterial surfaces and the release of the chemoattractant C5a by cleaving the central complement protein C3. The cleavage site renders the C3b molecule vulnerable to proteolytic degradation by host regulators. Cleaves and inactivates host SERPINA1, which is an endogenous protease inhibitor essential for controlling neutrophil serine protease elastase. Also plays an essential role in the cleavage and subsequent activation of the serine protease SspA (glutamyl endopeptidase) which is involved in colonization and infection of human tissues. This Staphylococcus aureus protein is Zinc metalloproteinase aureolysin.